The following is a 345-amino-acid chain: RNA polymerase II holoenzyme cyclin-like subunit (345 aa).

A Cyclin N-terminal domain is found at 53-144 (QQINRLGKRM…IGECEFYLIS (92 aa)). The disordered stretch occupies residues 256 to 285 (GLTPQSSSGLQAMLPPQSPAGEGPAEGNKN).

Belongs to the cyclin family. Cyclin C subfamily. Component of the srb8-11 complex, a regulatory module of the Mediator complex.

Its subcellular location is the nucleus. Functionally, component of the srb8-11 complex. The srb8-11 complex is a regulatory module of the Mediator complex which is itself involved in regulation of basal and activated RNA polymerase II-dependent transcription. The srb8-11 complex may be involved in the transcriptional repression of a subset of genes regulated by Mediator. It may inhibit the association of the Mediator complex with RNA polymerase II to form the holoenzyme complex. The srb8-11 complex phosphorylates the C-terminal domain (CTD) of the largest subunit of RNA polymerase II. This is RNA polymerase II holoenzyme cyclin-like subunit (ssn8) from Neurospora crassa (strain ATCC 24698 / 74-OR23-1A / CBS 708.71 / DSM 1257 / FGSC 987).